Here is a 297-residue protein sequence, read N- to C-terminus: Protoheme IX farnesyltransferase (297 aa).

Helical transmembrane passes span 23 to 43 (VTQLAVFCAVIGMFLAAPGMP), 49 to 69 (VFGTLGIWLLAAAAFAINCLI), 93 to 113 (IQVLSLSGLLGGAGMLVLYHL), 117 to 137 (LTMWLTFATFVGYAIIYTVIL), 144 to 164 (NIVIGGLSGAMPPALGWAAVA), 171 to 191 (AWVLVLIIFIWTPPHFWALAL), 215 to 235 (RLHILLYSFALLATTLLPYAI), 238 to 258 (SGALYLASALALGGMFVWYAW), and 275 to 295 (FSILYLALLFGALLIDHWVGL).

It belongs to the UbiA prenyltransferase family. Protoheme IX farnesyltransferase subfamily.

The protein resides in the cell inner membrane. The enzyme catalyses heme b + (2E,6E)-farnesyl diphosphate + H2O = Fe(II)-heme o + diphosphate. It functions in the pathway porphyrin-containing compound metabolism; heme O biosynthesis; heme O from protoheme: step 1/1. Its function is as follows. Converts heme B (protoheme IX) to heme O by substitution of the vinyl group on carbon 2 of heme B porphyrin ring with a hydroxyethyl farnesyl side group. This Bordetella bronchiseptica (strain ATCC BAA-588 / NCTC 13252 / RB50) (Alcaligenes bronchisepticus) protein is Protoheme IX farnesyltransferase.